A 230-amino-acid chain; its full sequence is Transmembrane protein 221 (230 aa).

Transmembrane regions (helical) follow at residues 12 to 32 (AMTL…QLLF), 73 to 93 (ALAA…ALCG), 125 to 145 (LFCC…LLLF), and 147 to 167 (IEAG…LVAI). The interval 184–230 (RELSPPSFEDEPARPSEDSKSGCRAQPPQDEETETPIGAVTHQGSHF) is disordered. Basic and acidic residues predominate over residues 194 to 204 (EPARPSEDSKS).

It localises to the membrane. This is Transmembrane protein 221 (Tmem221) from Mus musculus (Mouse).